Consider the following 33-residue polypeptide: Photosystem II reaction center protein Psb30 (33 aa).

A helical transmembrane segment spans residues 5–25 (LIVQLGSLTLITLAGPLVVVL).

Belongs to the Psb30/Ycf12 family. As to quaternary structure, PSII is composed of 1 copy each of membrane proteins PsbA, PsbB, PsbC, PsbD, PsbE, PsbF, PsbH, PsbI, PsbJ, PsbK, PsbL, PsbM, PsbT, PsbY, PsbZ, Psb30/Ycf12, peripheral proteins of the oxygen-evolving complex and a large number of cofactors. It forms dimeric complexes.

It is found in the plastid. The protein localises to the chloroplast thylakoid membrane. In terms of biological role, a core subunit of photosystem II (PSII), probably helps stabilize the reaction center. The sequence is that of Photosystem II reaction center protein Psb30 from Euglena deses.